The sequence spans 350 residues: Ketol-acid reductoisomerase (NADP(+)) (350 aa).

The KARI N-terminal Rossmann domain maps to 4 to 187; that stretch reads VSITTDYSRM…GGARANIIKT (184 aa). NADP(+)-binding positions include 30 to 33, Arg53, Thr58, and 88 to 91; these read YGSQ and DMVQ. The active site involves His113. Gly139 provides a ligand contact to NADP(+). Residues 188 to 333 form the KARI C-terminal knotted domain; the sequence is TFKEETETDL…KQLRAKMVWL (146 aa). Positions 196, 200, 232, and 236 each coordinate Mg(2+). Substrate is bound at residue Ser257.

It belongs to the ketol-acid reductoisomerase family. Mg(2+) serves as cofactor.

The catalysed reaction is (2R)-2,3-dihydroxy-3-methylbutanoate + NADP(+) = (2S)-2-acetolactate + NADPH + H(+). It catalyses the reaction (2R,3R)-2,3-dihydroxy-3-methylpentanoate + NADP(+) = (S)-2-ethyl-2-hydroxy-3-oxobutanoate + NADPH + H(+). Its pathway is amino-acid biosynthesis; L-isoleucine biosynthesis; L-isoleucine from 2-oxobutanoate: step 2/4. The protein operates within amino-acid biosynthesis; L-valine biosynthesis; L-valine from pyruvate: step 2/4. Functionally, involved in the biosynthesis of branched-chain amino acids (BCAA). Catalyzes an alkyl-migration followed by a ketol-acid reduction of (S)-2-acetolactate (S2AL) to yield (R)-2,3-dihydroxy-isovalerate. In the isomerase reaction, S2AL is rearranged via a Mg-dependent methyl migration to produce 3-hydroxy-3-methyl-2-ketobutyrate (HMKB). In the reductase reaction, this 2-ketoacid undergoes a metal-dependent reduction by NADPH to yield (R)-2,3-dihydroxy-isovalerate. The chain is Ketol-acid reductoisomerase (NADP(+)) from Xylella fastidiosa (strain 9a5c).